Consider the following 555-residue polypeptide: MFLGLDLSTQQLKGVVIDESLNVHQEVAVDFDRDLSDYNTIKGVYRNGYEVFAPVCMWLDAIDLLFERLKASVDVSKIQAISGAGQQHASVFLLKGSKKALNSLDAKSSLKQQLESLIHPTSPNWQDASTTKECEELESCIGGAKALADLTGSKAHLRFTGPQIKRFRRLHPETYENTERIALVSNFLASVLLQTEAPLDISDVCGMNLWDIQNEKFDIRLLEEVAGNSKGPDLANKLGTVEINGAKHLGPIGKYFVKKYGFSPNCQIIPLTGDNPATILSLPLRPGKDVLLSLGTSTTALMATQNYVCSPEYHMFAHPVTQNHYMVMLCYKNGSLAREQVRNTINEKYNVSDNTSWDRFNESILNPNIKGAGEKKQLGLFYPQREILPAVGPGTWRFAIQGTELYQVDKDEESWDYPDEDASAIVESQNLDIRMRITPLLTGIPQPDRVYVVGGASRNEAIVFKISQVLGCDVYRLKHGGSNACAVGGAIKAAYAMNGKGFTFEEYVNKSWDESKKIELIMNKPSAQTYEEYGKLLPFLKKAEDIAIQQSDIRH.

Residues H88, R158, D274, and N275 each coordinate substrate. ATP-binding positions include W357, 455–456 (GA), and N459.

This sequence belongs to the FGGY kinase family.

It localises to the cytoplasm. It carries out the reaction D-xylulose + ATP = D-xylulose 5-phosphate + ADP + H(+). The sequence is that of Xylulose kinase from Schizosaccharomyces pombe (strain 972 / ATCC 24843) (Fission yeast).